A 251-amino-acid chain; its full sequence is 3-deoxy-manno-octulosonate cytidylyltransferase (251 aa).

This sequence belongs to the KdsB family.

The protein localises to the cytoplasm. The enzyme catalyses 3-deoxy-alpha-D-manno-oct-2-ulosonate + CTP = CMP-3-deoxy-beta-D-manno-octulosonate + diphosphate. It functions in the pathway nucleotide-sugar biosynthesis; CMP-3-deoxy-D-manno-octulosonate biosynthesis; CMP-3-deoxy-D-manno-octulosonate from 3-deoxy-D-manno-octulosonate and CTP: step 1/1. The protein operates within bacterial outer membrane biogenesis; lipopolysaccharide biosynthesis. Functionally, activates KDO (a required 8-carbon sugar) for incorporation into bacterial lipopolysaccharide in Gram-negative bacteria. This chain is 3-deoxy-manno-octulosonate cytidylyltransferase, found in Vibrio vulnificus (strain CMCP6).